The sequence spans 165 residues: MRQHRQFMDRTHYLLTFSSSETLLRLLLRIVDRAPKGRTFGDVLQPAKPEYRVGEVAEVIFVGANPKNSVQNQTHQTFLTVEKYEATSTSWQIVCNDASWETRFYWHKGLLGLSNATVEWHIPDTAQPGIYRIRYFGHNRKQDILKPAVILSFEGTSPAFEVVTI.

This sequence belongs to the neutral ceramidase family. In terms of tissue distribution, ubiquitous. Expression is reduced with increasing age and in late-onset Alzheimer disease (LOAD) patients. This reduction is even more pronounced in patients with an affected mother.

The chain is Putative inactive neutral ceramidase B from Homo sapiens (Human).